Here is a 357-residue protein sequence, read N- to C-terminus: Red-sensitive opsin-1 (357 aa).

The Extracellular segment spans residues 1 to 49; that stretch reads MAEHWGDAIYAARRKGDETTREAMFTYTNSNNTKDPFEGPNYHIAPRWV. A glycan (N-linked (GlcNAc...) asparagine) is linked at asparagine 31. The chain crosses the membrane as a helical span at residues 50–74; the sequence is YNVATVWMFFVVVASTFTNGLVLVA. At 75–86 the chain is on the cytoplasmic side; that stretch reads TAKFKKLRHPLN. A helical membrane pass occupies residues 87 to 112; the sequence is WILVNLAIADLGETLFASTISVINQF. At 113–126 the chain is on the extracellular side; sequence FGYFILGHPMCIFE. Cysteine 123 and cysteine 200 form a disulfide bridge. The helical transmembrane segment at 127 to 146 threads the bilayer; it reads GYTVSVCGIAALWSLTVISW. The Cytoplasmic segment spans residues 147-165; that stretch reads ERWVVVCKPFGNVKFDAKW. A helical membrane pass occupies residues 166–189; it reads ASAGIIFSWVWAAAWCAPPIFGWS. At 190 to 215 the chain is on the extracellular side; it reads RYWPHGLKTSCGPDVFSGSEDPGVQS. The helical transmembrane segment at 216–243 threads the bilayer; the sequence is YMVVLMITCCIIPLAIIILCYIAVYLAI. Residues 244-265 are Cytoplasmic-facing; sequence HAVAQQQKDSESTQKAEKEVSR. The chain crosses the membrane as a helical span at residues 266–289; it reads MVVVMIFAYCFCWGPYTFFACFAA. Residues 290-297 lie on the Extracellular side of the membrane; the sequence is ANPGYAFH. A helical membrane pass occupies residues 298 to 322; it reads PLAAAMPAYFAKSATIYNPVIYVFM. An N6-(retinylidene)lysine modification is found at lysine 309. Over 323-357 the chain is Cytoplasmic; it reads NRQFRVCIMQLFGKKVDDGSEVSTSKTEVSSVAPA.

The protein belongs to the G-protein coupled receptor 1 family. Opsin subfamily. Post-translationally, phosphorylated on some or all of the serine and threonine residues present in the C-terminal region. In terms of tissue distribution, retinal double cone principal photoreceptor cell outer segments.

It localises to the membrane. In terms of biological role, visual pigments are the light-absorbing molecules that mediate vision. They consist of an apoprotein, opsin, covalently linked to cis-retinal. The polypeptide is Red-sensitive opsin-1 (opn1lw1) (Danio rerio (Zebrafish)).